Reading from the N-terminus, the 221-residue chain is MKFFATIAALVVGAVAAPVAEAEAEASSPMLIERAGPGGINYVQNYNGNLGQFTYNENAGTYSMYWNNGVNGDFVVGLGWSTGAARSITYSSNYQASGGSYLSVYGWINSPQAEYYIVESYGSYNPCGAGQSGVTQLGTVCSDGATYTVYTDTRTNQPSITGTSTFKQYWSVRQTKRTSGTVTTGNHFAYWAKYGFGNSYNFQVMPVEAFSGTGSASVTVS.

A signal peptide spans 1-16 (MKFFATIAALVVGAVA). A GH11 domain is found at 29–221 (PMLIERAGPG…GTGSASVTVS (193 aa)). Residue Glu-114 is the Nucleophile of the active site. Residue Glu-208 is the Proton donor of the active site.

It belongs to the glycosyl hydrolase 11 (cellulase G) family.

It is found in the secreted. It catalyses the reaction Endohydrolysis of (1-&gt;4)-beta-D-xylosidic linkages in xylans.. It functions in the pathway glycan degradation; xylan degradation. Functionally, endo-1,4-beta-xylanase involved in the hydrolysis of xylan, a major structural heterogeneous polysaccharide found in plant biomass representing the second most abundant polysaccharide in the biosphere, after cellulose. This Aureobasidium pullulans (Black yeast) protein is Endo-1,4-beta-xylanase A (xynA).